The chain runs to 118 residues: Putative pterin-4-alpha-carbinolamine dehydratase (118 aa).

The protein belongs to the pterin-4-alpha-carbinolamine dehydratase family.

It catalyses the reaction (4aS,6R)-4a-hydroxy-L-erythro-5,6,7,8-tetrahydrobiopterin = (6R)-L-erythro-6,7-dihydrobiopterin + H2O. This Xanthomonas campestris pv. campestris (strain 8004) protein is Putative pterin-4-alpha-carbinolamine dehydratase.